The primary structure comprises 669 residues: DNA ligase (669 aa).

NAD(+) contacts are provided by residues 33–37 (DAEYD), 82–83 (SL), and glutamate 114. The active-site N6-AMP-lysine intermediate is lysine 116. Arginine 137, glutamate 174, lysine 291, and lysine 315 together coordinate NAD(+). Cysteine 409, cysteine 412, cysteine 427, and cysteine 433 together coordinate Zn(2+). A BRCT domain is found at 593-669 (EIPQPLAGKV…QTEQDLLALL (77 aa)).

Belongs to the NAD-dependent DNA ligase family. LigA subfamily. The cofactor is Mg(2+). Mn(2+) serves as cofactor.

It catalyses the reaction NAD(+) + (deoxyribonucleotide)n-3'-hydroxyl + 5'-phospho-(deoxyribonucleotide)m = (deoxyribonucleotide)n+m + AMP + beta-nicotinamide D-nucleotide.. DNA ligase that catalyzes the formation of phosphodiester linkages between 5'-phosphoryl and 3'-hydroxyl groups in double-stranded DNA using NAD as a coenzyme and as the energy source for the reaction. It is essential for DNA replication and repair of damaged DNA. The chain is DNA ligase from Vibrio vulnificus (strain YJ016).